The primary structure comprises 119 residues: Chorion class CA protein ERA.3 (119 aa).

The first 21 residues, 1–21 (MSYFVVFAICIQACLFHNVYS), serve as a signal peptide directing secretion. The left arm stretch occupies residues 22–55 (QCLGRVGPGGPPLGPYGGPLGGPGYGPVGYGGCG). Residues 56–103 (GYGGSGIGNVAVAGELPVVGSSAVMGQVPVIGAVEFAGPACAVGSVSI) are central domain. The segment at 104–119 (SGACGPTCGCGGLPYY) is right arm.

It belongs to the chorion protein family.

Functionally, this protein is one of many from the eggshell of the silk moth. The sequence is that of Chorion class CA protein ERA.3 (ERA.3) from Bombyx mori (Silk moth).